We begin with the raw amino-acid sequence, 43 residues long: MAVPKQKKSKSKSRFKKKNFLLKNKIIAKNQYNNYFIKHRCLV.

This sequence belongs to the bacterial ribosomal protein bL32 family.

The polypeptide is Large ribosomal subunit protein bL32 (rpmF) (Carsonella ruddii (strain PV)).